We begin with the raw amino-acid sequence, 96 residues long: Co-chaperonin GroES (96 aa).

This sequence belongs to the GroES chaperonin family. In terms of assembly, heptamer of 7 subunits arranged in a ring. Interacts with the chaperonin GroEL.

It localises to the cytoplasm. In terms of biological role, together with the chaperonin GroEL, plays an essential role in assisting protein folding. The GroEL-GroES system forms a nano-cage that allows encapsulation of the non-native substrate proteins and provides a physical environment optimized to promote and accelerate protein folding. GroES binds to the apical surface of the GroEL ring, thereby capping the opening of the GroEL channel. In Actinobacillus pleuropneumoniae serotype 5b (strain L20), this protein is Co-chaperonin GroES.